The primary structure comprises 281 residues: Hexaprenyl pyrophosphate synthase (281 aa).

3 residues coordinate isopentenyl diphosphate: K42, R45, and H74. 2 residues coordinate Mg(2+): D81 and D85. R91 provides a ligand contact to isopentenyl diphosphate.

This sequence belongs to the FPP/GGPP synthase family. As to quaternary structure, homodimer. Mg(2+) is required as a cofactor.

The enzyme catalyses 2 isopentenyl diphosphate + (2E,6E,10E)-geranylgeranyl diphosphate = all-trans-hexaprenyl diphosphate + 2 diphosphate. Catalyzes consecutive E-type condensation of two isopentenyl pyrophosphate (IPP) molecules with an allylic substrate such as geranylgeranyl diphosphate (GGPP), farnesyl diphosphate (FPP) or geranyl diphosphate (GPP) to yield the medium-chain product trans-C30-hexaprenyl pyrophosphate (HexPP). GGPP is the physiological substrate. The sequence is that of Hexaprenyl pyrophosphate synthase (gdS-2) from Saccharolobus solfataricus (strain ATCC 35092 / DSM 1617 / JCM 11322 / P2) (Sulfolobus solfataricus).